The sequence spans 308 residues: Elongation factor Ts (308 aa).

Residues 80–83 are involved in Mg(2+) ion dislocation from EF-Tu; the sequence is TDFV.

The protein belongs to the EF-Ts family.

The protein resides in the cytoplasm. In terms of biological role, associates with the EF-Tu.GDP complex and induces the exchange of GDP to GTP. It remains bound to the aminoacyl-tRNA.EF-Tu.GTP complex up to the GTP hydrolysis stage on the ribosome. The polypeptide is Elongation factor Ts (Agrobacterium fabrum (strain C58 / ATCC 33970) (Agrobacterium tumefaciens (strain C58))).